A 576-amino-acid chain; its full sequence is Arginine--tRNA ligase (576 aa).

Positions 122–132 (PNVAKQMHVGH) match the 'HIGH' region motif.

It belongs to the class-I aminoacyl-tRNA synthetase family. In terms of assembly, monomer.

The protein resides in the cytoplasm. It carries out the reaction tRNA(Arg) + L-arginine + ATP = L-arginyl-tRNA(Arg) + AMP + diphosphate. In Photorhabdus laumondii subsp. laumondii (strain DSM 15139 / CIP 105565 / TT01) (Photorhabdus luminescens subsp. laumondii), this protein is Arginine--tRNA ligase.